Here is a 492-residue protein sequence, read N- to C-terminus: N-succinylglutamate 5-semialdehyde dehydrogenase (492 aa).

220–225 lines the NAD(+) pocket; sequence GSASTG. Residues glutamate 243 and cysteine 277 contribute to the active site.

It belongs to the aldehyde dehydrogenase family. AstD subfamily.

It catalyses the reaction N-succinyl-L-glutamate 5-semialdehyde + NAD(+) + H2O = N-succinyl-L-glutamate + NADH + 2 H(+). It participates in amino-acid degradation; L-arginine degradation via AST pathway; L-glutamate and succinate from L-arginine: step 4/5. Functionally, catalyzes the NAD-dependent reduction of succinylglutamate semialdehyde into succinylglutamate. This chain is N-succinylglutamate 5-semialdehyde dehydrogenase, found in Salmonella enteritidis PT4 (strain P125109).